Consider the following 440-residue polypeptide: GTPase Der (440 aa).

EngA-type G domains follow at residues 4–168 (PIVA…PENK) and 177–352 (IKVA…NQRA). GTP is bound by residues 10 to 17 (GRPNVGKS), 57 to 61 (DTGGI), 120 to 123 (NKVD), 183 to 190 (GKPNVGKS), 230 to 234 (DTAGL), and 295 to 298 (NKWD). Residues 353–437 (MRVPTGGLNE…PIRFIYREKS (85 aa)) enclose the KH-like domain.

It belongs to the TRAFAC class TrmE-Era-EngA-EngB-Septin-like GTPase superfamily. EngA (Der) GTPase family. Associates with the 50S ribosomal subunit.

GTPase that plays an essential role in the late steps of ribosome biogenesis. The polypeptide is GTPase Der (Alkaliphilus metalliredigens (strain QYMF)).